The following is a 424-amino-acid chain: Ornithine aminotransferase (424 aa).

Lys-272 bears the N6-(pyridoxal phosphate)lysine mark. A Glycyl lysine isopeptide (Lys-Gly) (interchain with G-Cter in ubiquitin) cross-link involves residue Lys-390.

This sequence belongs to the class-III pyridoxal-phosphate-dependent aminotransferase family. Pyridoxal 5'-phosphate is required as a cofactor.

It is found in the cytoplasm. It catalyses the reaction a 2-oxocarboxylate + L-ornithine = L-glutamate 5-semialdehyde + an L-alpha-amino acid. The protein operates within amino-acid biosynthesis; L-proline biosynthesis; L-glutamate 5-semialdehyde from L-ornithine: step 1/1. With respect to regulation, by arginine and urea. Functionally, catalyzes the transamination of ornithine into L-glutamate gamma-semialdehyde, the second step of arginine degradation. The chain is Ornithine aminotransferase (CAR2) from Saccharomyces cerevisiae (strain ATCC 204508 / S288c) (Baker's yeast).